A 314-amino-acid chain; its full sequence is Lysophospholipase D GDPD1 (314 aa).

At 1 to 3 the chain is on the extracellular side; sequence MSS. A helical membrane pass occupies residues 4 to 24; it reads TAAFCLLSTLGGYLVTSFLLL. Over 25–195 the chain is Cytoplasmic; it reads KYPALLHQRK…VDKCYKENSD (171 aa). The region spanning 40–309 is the GP-PDE domain; that stretch reads SRHISHRGGA…DYPTKLKEFL (270 aa). Glu-72, Asp-74, and His-87 together coordinate a divalent metal cation. A helical membrane pass occupies residues 196 to 216; it reads IPILFSLQRVLLILGLFFTGL. At 217 to 314 the chain is on the extracellular side; that stretch reads LPFVPIREQF…LKEFLNNMSA (98 aa).

Belongs to the glycerophosphoryl diester phosphodiesterase family.

It localises to the cytoplasm. The protein resides in the membrane. It is found in the perinuclear region. Its subcellular location is the endoplasmic reticulum. The catalysed reaction is a 1-O-alkyl-sn-glycero-3-phosphocholine + H2O = a 1-O-alkyl-sn-glycero-3-phosphate + choline + H(+). It catalyses the reaction 1-hexadecanoyl-sn-glycero-3-phosphocholine + H2O = 1-hexadecanoyl-sn-glycero-3-phosphate + choline + H(+). It carries out the reaction 1-hexadecanoyl-sn-glycero-3-phosphoethanolamine + H2O = 1-hexadecanoyl-sn-glycero-3-phosphate + ethanolamine + H(+). The enzyme catalyses N-hexadecanoyl-sn-glycero-3-phosphoethanolamine + H2O = N-hexadecanoylethanolamine + sn-glycerol 3-phosphate + H(+). The catalysed reaction is N-(5Z,8Z,11Z,14Z-eicosatetraenoyl)-1-(9Z-octadecenoyl)-sn-glycero-3-phosphoethanolamine + H2O = N-(5Z,8Z,11Z,14Z-eicosatetraenoyl)-ethanolamine + 1-(9Z-octadecenoyl)-sn-glycero-3-phosphate + H(+). It catalyses the reaction N,1-di-(9Z-octadecenoyl)-sn-glycero-3-phosphoethanolamine + H2O = N-(9Z-octadecenoyl) ethanolamine + 1-(9Z-octadecenoyl)-sn-glycero-3-phosphate + H(+). It carries out the reaction N-hexadecanoyl-1-(9Z-octadecenoyl)-sn-glycero-3-phosphoethanolamine + H2O = N-hexadecanoylethanolamine + 1-(9Z-octadecenoyl)-sn-glycero-3-phosphate + H(+). The enzyme catalyses 1-O-hexadecyl-sn-glycero-3-phosphocholine + H2O = 1-O-hexadecyl-sn-glycero-3-phosphate + choline + H(+). The catalysed reaction is 1-(9Z-octadecenoyl)-sn-glycero-3-phosphocholine + H2O = 1-(9Z-octadecenoyl)-sn-glycero-3-phosphate + choline + H(+). It catalyses the reaction N,1-dihexadecanoyl-sn-glycero-3-phosphoethanolamine + H2O = N-hexadecanoylethanolamine + 1-hexadecanoyl-sn-glycero-3-phosphate + H(+). It carries out the reaction 1-O-(1Z-octadecenyl)-sn-glycero-3-phospho-(N-5Z,8Z,11Z,14Z-eicosatetraenoyl)-ethanolamine + H2O = 1-O-(1Z-octadecenyl)-sn-glycero-3-phosphate + N-(5Z,8Z,11Z,14Z-eicosatetraenoyl)-ethanolamine + H(+). The enzyme catalyses 1-O-(1Z-octadecenyl)-sn-glycero-3-phospho-(N-9Z-octadecenoyl)-ethanolamine + H2O = 1-O-(1Z-octadecenyl)-sn-glycero-3-phosphate + N-(9Z-octadecenoyl) ethanolamine + H(+). The catalysed reaction is 1-O-(1Z-octadecenyl)-sn-glycero-3-phospho-N-hexadecanoyl-ethanolamine + H2O = 1-O-(1Z-octadecenyl)-sn-glycero-3-phosphate + N-hexadecanoylethanolamine + H(+). With respect to regulation, lysophospholipase D activity is increased by magnesium and manganese and inhibited by calcium in a concentration dependent manner. Loss of lysophospholipase D activity by addition of EDTA. Functionally, hydrolyzes lysoglycerophospholipids to produce lysophosphatidic acid (LPA) and the corresponding amines. Shows a preference for 1-O-alkyl-sn-glycero-3-phosphocholine (lyso-PAF), lysophosphatidylethanolamine (lyso-PE) and lysophosphatidylcholine (lyso-PC). May be involved in bioactive N-acylethanolamine biosynthesis from both N-acyl-lysoplasmenylethanolamin (N-acyl-lysoPlsEt) and N-acyl-lysophosphatidylethanolamin (N-acyl-lysoPE). In addition, hydrolyzes glycerophospho-N-acylethanolamine to N-acylethanolamine. Does not display glycerophosphodiester phosphodiesterase activity, since it cannot hydrolyze either glycerophosphoinositol or glycerophosphocholine. The chain is Lysophospholipase D GDPD1 from Rattus norvegicus (Rat).